The chain runs to 271 residues: 4-hydroxy-tetrahydrodipicolinate reductase (271 aa).

An NAD(+)-binding site is contributed by 8-13 (GITGRM). Arg35 contacts NADP(+). Residues 100-102 (GST) and 124-127 (APNM) each bind NAD(+). His157 functions as the Proton donor/acceptor in the catalytic mechanism. Residue His158 coordinates (S)-2,3,4,5-tetrahydrodipicolinate. Lys161 acts as the Proton donor in catalysis. 167 to 168 (GT) contacts (S)-2,3,4,5-tetrahydrodipicolinate.

This sequence belongs to the DapB family.

The protein resides in the cytoplasm. It carries out the reaction (S)-2,3,4,5-tetrahydrodipicolinate + NAD(+) + H2O = (2S,4S)-4-hydroxy-2,3,4,5-tetrahydrodipicolinate + NADH + H(+). The enzyme catalyses (S)-2,3,4,5-tetrahydrodipicolinate + NADP(+) + H2O = (2S,4S)-4-hydroxy-2,3,4,5-tetrahydrodipicolinate + NADPH + H(+). It functions in the pathway amino-acid biosynthesis; L-lysine biosynthesis via DAP pathway; (S)-tetrahydrodipicolinate from L-aspartate: step 4/4. In terms of biological role, catalyzes the conversion of 4-hydroxy-tetrahydrodipicolinate (HTPA) to tetrahydrodipicolinate. In Myxococcus xanthus (strain DK1622), this protein is 4-hydroxy-tetrahydrodipicolinate reductase.